Reading from the N-terminus, the 441-residue chain is MSETHLSNQKFADFSLNKEIKTALNESGFEFCTPIQALSLPILLQKKDIAGQAQTGTGKTLAFLVATFDHLLSTPVPEGRQLNQPRAMIMAPTRELAIQIAKDATLLAKHTGLKVGIVYGGESYDVQRKVLDKGVDILIGTTGRIIDYVRQGIINLSAIQAVVLDEADRMFDLGFIKDIRFLFRRMPDAKSRLNMLFSATLSMKVQELAYDHMNEPEKVVIAPNEKTSKNIKEEIFYPSMDEKMRLLLSLIEEDWPEKAIVFSNTKHSCENVWSWLEGDGHRVGLLTGDVPQKKRIRILEQFTEGKLDILVATDVAARGLHISDVSHVYNYDLPDDCEDYVHRIGRTGRAGKKGVSVSFACEEYALNLPAIEEYITHSIPVTNYDSEGLLDDIPAPIRVHRKHNNRPQQGRNNSGRPQGRNGNRAGGRNGPRRHDQVRRHS.

Residues 9 to 37 carry the Q motif motif; sequence QKFADFSLNKEIKTALNESGFEFCTPIQA. The 180-residue stretch at 40 to 219 folds into the Helicase ATP-binding domain; it reads LPILLQKKDI…YDHMNEPEKV (180 aa). ATP is bound at residue 53-60; that stretch reads AQTGTGKT. Positions 165–168 match the DEAD box motif; the sequence is DEAD. The Helicase C-terminal domain maps to 243-390; it reads KMRLLLSLIE…VTNYDSEGLL (148 aa). A disordered region spans residues 401–441; that stretch reads RKHNNRPQQGRNNSGRPQGRNGNRAGGRNGPRRHDQVRRHS.

The protein belongs to the DEAD box helicase family. RhlB subfamily. In terms of assembly, component of the RNA degradosome, which is a multiprotein complex involved in RNA processing and mRNA degradation.

The protein localises to the cytoplasm. The catalysed reaction is ATP + H2O = ADP + phosphate + H(+). Its function is as follows. DEAD-box RNA helicase involved in RNA degradation. Has RNA-dependent ATPase activity and unwinds double-stranded RNA. This Shewanella woodyi (strain ATCC 51908 / MS32) protein is ATP-dependent RNA helicase RhlB.